A 155-amino-acid chain; its full sequence is Anaerobic ribonucleoside-triphosphate reductase-activating protein (155 aa).

3 residues coordinate [4Fe-4S] cluster: C26, C30, and C33. S-adenosyl-L-methionine is bound by residues 32–34 (GCY) and G74.

Belongs to the organic radical-activating enzymes family. Forms a tetramer composed of two NrdD and two NrdG subunits. [4Fe-4S] cluster is required as a cofactor.

It localises to the cytoplasm. It carries out the reaction glycyl-[protein] + reduced [flavodoxin] + S-adenosyl-L-methionine = glycin-2-yl radical-[protein] + semiquinone [flavodoxin] + 5'-deoxyadenosine + L-methionine + H(+). Activation of anaerobic ribonucleoside-triphosphate reductase under anaerobic conditions by generation of an organic free radical, using S-adenosylmethionine and reduced flavodoxin as cosubstrates to produce 5'-deoxy-adenosine. In Haemophilus influenzae (strain ATCC 51907 / DSM 11121 / KW20 / Rd), this protein is Anaerobic ribonucleoside-triphosphate reductase-activating protein (nrdG).